Consider the following 338-residue polypeptide: 1-aminocyclopropane-1-carboxylate deaminase (338 aa).

Lysine 51 is modified (N6-(pyridoxal phosphate)lysine). Residue serine 78 is the Nucleophile of the active site.

Belongs to the ACC deaminase/D-cysteine desulfhydrase family. Pyridoxal 5'-phosphate serves as cofactor.

It catalyses the reaction 1-aminocyclopropane-1-carboxylate + H2O = 2-oxobutanoate + NH4(+). In terms of biological role, catalyzes a cyclopropane ring-opening reaction, the irreversible conversion of 1-aminocyclopropane-1-carboxylate (ACC) to ammonia and alpha-ketobutyrate. Allows growth on ACC as a nitrogen source. The polypeptide is 1-aminocyclopropane-1-carboxylate deaminase (Enterobacter cloacae).